A 178-amino-acid polypeptide reads, in one-letter code: Ribonuclease M5 (178 aa).

A Toprim domain is found at 4-100; it reads NEFIVVEGRD…KIGVEHADLI (97 aa). 3 residues coordinate Mg(2+): glutamate 10, aspartate 56, and aspartate 58.

This sequence belongs to the ribonuclease M5 family. Requires Mg(2+) as cofactor.

Its subcellular location is the cytoplasm. The catalysed reaction is Endonucleolytic cleavage of RNA, removing 21 and 42 nucleotides, respectively, from the 5'- and 3'-termini of a 5S-rRNA precursor.. In terms of biological role, required for correct processing of both the 5' and 3' ends of 5S rRNA precursor. Cleaves both sides of a double-stranded region yielding mature 5S rRNA in one step. The polypeptide is Ribonuclease M5 (Staphylococcus aureus (strain NCTC 8325 / PS 47)).